A 262-amino-acid polypeptide reads, in one-letter code: Tryptophan synthase alpha chain (262 aa).

Residues Glu49 and Asp60 each act as proton acceptor in the active site.

This sequence belongs to the TrpA family. Tetramer of two alpha and two beta chains.

The enzyme catalyses (1S,2R)-1-C-(indol-3-yl)glycerol 3-phosphate + L-serine = D-glyceraldehyde 3-phosphate + L-tryptophan + H2O. It functions in the pathway amino-acid biosynthesis; L-tryptophan biosynthesis; L-tryptophan from chorismate: step 5/5. In terms of biological role, the alpha subunit is responsible for the aldol cleavage of indoleglycerol phosphate to indole and glyceraldehyde 3-phosphate. This is Tryptophan synthase alpha chain from Caldanaerobacter subterraneus subsp. tengcongensis (strain DSM 15242 / JCM 11007 / NBRC 100824 / MB4) (Thermoanaerobacter tengcongensis).